The sequence spans 400 residues: Enoyl-[acyl-carrier-protein] reductase [NADH] (400 aa).

Residues 48 to 53, 74 to 75, 111 to 112, and 139 to 140 contribute to the NAD(+) site; these read GSSSGY, FE, DA, and LA. A substrate-binding site is contributed by Tyr225. The active-site Proton donor is Tyr235. NAD(+)-binding positions include Lys244 and 273 to 275; that span reads VVT.

Belongs to the TER reductase family. As to quaternary structure, monomer.

It catalyses the reaction a 2,3-saturated acyl-[ACP] + NAD(+) = a (2E)-enoyl-[ACP] + NADH + H(+). Its pathway is lipid metabolism; fatty acid biosynthesis. Involved in the final reduction of the elongation cycle of fatty acid synthesis (FAS II). Catalyzes the reduction of a carbon-carbon double bond in an enoyl moiety that is covalently linked to an acyl carrier protein (ACP). This is Enoyl-[acyl-carrier-protein] reductase [NADH] from Aliivibrio fischeri (strain ATCC 700601 / ES114) (Vibrio fischeri).